A 241-amino-acid chain; its full sequence is Uracil-DNA glycosylase (241 aa).

The active-site Proton acceptor is the Asp68.

The protein belongs to the uracil-DNA glycosylase (UDG) superfamily. UNG family.

It localises to the cytoplasm. The enzyme catalyses Hydrolyzes single-stranded DNA or mismatched double-stranded DNA and polynucleotides, releasing free uracil.. Functionally, excises uracil residues from the DNA which can arise as a result of misincorporation of dUMP residues by DNA polymerase or due to deamination of cytosine. The polypeptide is Uracil-DNA glycosylase (Rhizobium meliloti (strain 1021) (Ensifer meliloti)).